We begin with the raw amino-acid sequence, 356 residues long: Peptide-N(4)-(N-acetyl-beta-glucosaminyl)asparagine amidase (356 aa).

C129, C132, C163, and C166 together coordinate Zn(2+). C189 acts as the Nucleophile in catalysis. Active-site residues include H216 and D233. E236 contributes to the substrate binding site. Positions 300 to 356 (IRQNLSPSEKEELKREDEAEERELASYNADEPQEAQMPRQSGSVEWTKARGEGGSDD) are disordered. 2 stretches are compositionally biased toward basic and acidic residues: residues 307–316 (SEKEELKRED) and 346–356 (TKARGEGGSDD).

Belongs to the transglutaminase-like superfamily. PNGase family. Zn(2+) is required as a cofactor.

It is found in the cytoplasm. It carries out the reaction Hydrolysis of an N(4)-(acetyl-beta-D-glucosaminyl)asparagine residue in which the glucosamine residue may be further glycosylated, to yield a (substituted) N-acetyl-beta-D-glucosaminylamine and a peptide containing an aspartate residue.. Specifically deglycosylates the denatured form of N-linked glycoproteins in the cytoplasm and assists their proteasome-mediated degradation. Cleaves the beta-aspartyl-glucosamine (GlcNAc) of the glycan and the amide side chain of Asn, converting Asn to Asp. Prefers proteins containing high-mannose over those bearing complex type oligosaccharides. Can recognize misfolded proteins in the endoplasmic reticulum that are exported to the cytosol to be destroyed and deglycosylate them, while it has no activity toward native proteins. Deglycosylation is a prerequisite for subsequent proteasome-mediated degradation of some, but not all, misfolded glycoproteins. The sequence is that of Peptide-N(4)-(N-acetyl-beta-glucosaminyl)asparagine amidase (PNG1) from Yarrowia lipolytica (strain CLIB 122 / E 150) (Yeast).